Here is a 207-residue protein sequence, read N- to C-terminus: Small ribosomal subunit protein uS4 (207 aa).

Residues 31-56 (KCKLDSKPGQHGRTSGARTSDYGNQL) form a disordered region. The segment covering 42 to 53 (GRTSGARTSDYG) has biased composition (polar residues). The S4 RNA-binding domain occupies 97–157 (ARLDNVVYRM…EKSKKQVRIV (61 aa)).

This sequence belongs to the universal ribosomal protein uS4 family. Part of the 30S ribosomal subunit. Contacts protein S5. The interaction surface between S4 and S5 is involved in control of translational fidelity.

Functionally, one of the primary rRNA binding proteins, it binds directly to 16S rRNA where it nucleates assembly of the body of the 30S subunit. In terms of biological role, with S5 and S12 plays an important role in translational accuracy. The sequence is that of Small ribosomal subunit protein uS4 from Janthinobacterium sp. (strain Marseille) (Minibacterium massiliensis).